The following is a 193-amino-acid chain: dCTP deaminase, dUMP-forming (193 aa).

DCTP-binding positions include Lys-101–Arg-106, Asp-119, Thr-127–Glu-129, Gln-148, Tyr-162, and Gln-174. The active-site Proton donor/acceptor is Glu-129. The interval Pro-161–Gln-184 is disordered.

This sequence belongs to the dCTP deaminase family. In terms of assembly, homotrimer.

The enzyme catalyses dCTP + 2 H2O = dUMP + NH4(+) + diphosphate. It functions in the pathway pyrimidine metabolism; dUMP biosynthesis; dUMP from dCTP: step 1/1. Bifunctional enzyme that catalyzes both the deamination of dCTP to dUTP and the hydrolysis of dUTP to dUMP without releasing the toxic dUTP intermediate. The protein is dCTP deaminase, dUMP-forming of Bifidobacterium animalis subsp. lactis (strain AD011).